Here is a 127-residue protein sequence, read N- to C-terminus: RxLR effector protein SFI3 (127 aa).

The N-terminal stretch at 1–20 (MRFLLVAVVAMMALVSSSTA) is a signal peptide. The RxLR-dEER motif lies at 40-62 (RSLRNTEERSIAAILAEAGEEDR). The tract at residues 72–107 (WYKAKLTPTQVKTVLGVSQAEMNNVAKQLQRLYLGY) is WY-domain.

It belongs to the RxLR effector family. In terms of assembly, forms an unusual trans-homodimer. Interacts with host UBK.

The protein resides in the secreted. Its subcellular location is the host nucleus. It is found in the host nucleolus. Functionally, effector that suppresses flg22-induced post-translational MAP kinase activation in potato and tomato, but not in Arabidopsis. The perception of highly conserved pathogen- or microbe-associated molecular patterns (PAMPs/MAMPs), such as flg22, triggers converging signaling pathways recruiting MAP kinase cascades and inducing transcriptional re-programming, yielding a generic antimicrobial response. Does not suppress programmed cell death triggered by the P.infestans elicitin infestin-1 (INF1), or by co-expression of tomato Cf4 with Cladosporium fulvum Avr4. Suppresses early pattern-triggered immunity (PTI) via interaction with the U-box-kinase protein UBK, a positive regulator of specific PTI pathways in both potato and Nicotiana benthamiana. This chain is RxLR effector protein SFI3, found in Phytophthora infestans (strain T30-4) (Potato late blight agent).